The primary structure comprises 456 residues: Potassium voltage-gated channel subfamily A member 7 (456 aa).

A helical membrane pass occupies residues 144–164 (VLAVVSVLVILVSIVVFCLET). An N-linked (GlcNAc...) asparagine glycan is attached at Asn191. Residues 209–229 (FFVVETLCICWFSFELLVRLL) traverse the membrane as a helical segment. Residue Cys231 is the site of S-palmitoyl cysteine attachment. The helical transmembrane segment at 241–261 (VMNLIDFVAILPYFVALGTEL) threads the bilayer. A helical; Voltage-sensor transmembrane segment spans residues 276 to 295 (ILRVIRLVRVFRIFKLSRHS). A helical transmembrane segment spans residues 312–332 (LGLLIFFLFIGVVLFSSAVYF). Positions 358 to 363 (TVGYGD) match the Selectivity filter motif. A helical transmembrane segment spans residues 373–393 (IVGSLCAIAGVLTISLPVPVI).

Belongs to the potassium channel family. A (Shaker) (TC 1.A.1.2) subfamily. Kv1.7/KCNA7 sub-subfamily. Heterotetramer of potassium channel proteins. Highly expressed in skeletal muscle, heart and kidney.

It localises to the membrane. The enzyme catalyses K(+)(in) = K(+)(out). Its function is as follows. Mediates the voltage-dependent potassium ion permeability of excitable membranes. Assuming opened or closed conformations in response to the voltage difference across the membrane, the protein forms a potassium-selective channel through which potassium ions may pass in accordance with their electrochemical gradient. The protein is Potassium voltage-gated channel subfamily A member 7 (KCNA7) of Homo sapiens (Human).